The chain runs to 104 residues: Large ribosomal subunit protein uL24 (104 aa).

The protein belongs to the universal ribosomal protein uL24 family. In terms of assembly, part of the 50S ribosomal subunit.

Functionally, one of two assembly initiator proteins, it binds directly to the 5'-end of the 23S rRNA, where it nucleates assembly of the 50S subunit. Its function is as follows. One of the proteins that surrounds the polypeptide exit tunnel on the outside of the subunit. In Pseudoalteromonas atlantica (strain T6c / ATCC BAA-1087), this protein is Large ribosomal subunit protein uL24.